The following is a 221-amino-acid chain: Ribonuclease T (221 aa).

The 175-residue stretch at 21–195 folds into the Exonuclease domain; the sequence is VVVDVETAGF…YDAEKTADLF (175 aa). Positions 24, 26, 182, and 187 each coordinate Mg(2+). His182 (proton donor/acceptor) is an active-site residue.

This sequence belongs to the RNase T family. In terms of assembly, homodimer. Mg(2+) is required as a cofactor.

Functionally, trims short 3' overhangs of a variety of RNA species, leaving a one or two nucleotide 3' overhang. Responsible for the end-turnover of tRNA: specifically removes the terminal AMP residue from uncharged tRNA (tRNA-C-C-A). Also appears to be involved in tRNA biosynthesis. This Marinobacter nauticus (strain ATCC 700491 / DSM 11845 / VT8) (Marinobacter aquaeolei) protein is Ribonuclease T.